A 2335-amino-acid polypeptide reads, in one-letter code: Pre-mRNA-processing-splicing factor 8 (2335 aa).

N-acetylalanine is present on alanine 2. Residues 812 to 1303 are reverse transcriptase homology domain; it reads TTVHWLESRR…KIQTRIKIGL (492 aa). Serine 859 and serine 1358 each carry phosphoserine. The tract at residues 1304–1577 is linker; sequence NSKMPSRFPP…TLKISLIQIF (274 aa). Lysine 1425 carries the N6,N6-dimethyllysine modification. The residue at position 1463 (lysine 1463) is an N6-acetyllysine. Residues 1513–1526 are important for branch point selection; that stretch reads MKWKKLTNAQRSGL. A restriction endonuclease homology domain region spans residues 1581-1752; it reads LWQKIHESIV…LRERIRKGLQ (172 aa). Residues 1669–2034 form an involved in interaction with pre-mRNA 5' splice site region; the sequence is GDYDSHDIER…QIAEIEKQTK (366 aa). Residues 1767–2020 form an RNase H homology domain region; sequence NYGELFSNQI…ILGMEISAPS (254 aa). One can recognise an MPN domain in the interval 2103–2234; sequence TYILPKNVLK…LTAYKLTPSG (132 aa). The tract at residues 2301–2335 is required for interaction with EFTUD2 and SNRNP200; sequence PKEFYHEVHRPSHFLNFALLQEGEVYSADREDLYA.

Part of the U5 snRNP complex. Component of the U4/U6-U5 tri-snRNP complex composed of the U4, U6 and U5 snRNAs and at least PRPF3, PRPF4, PRPF6, PRPF8, PRPF31, SNRNP200, TXNL4A, SNRNP40, DDX23, CD2BP2, PPIH, SNU13, EFTUD2, SART1 and USP39. Component of the U5.U4atac/U6atac snRNP complexes in U12-dependent spliceosomes. Within the minor spliceosome, which acts on U12-type introns, interacts with PPIL2 and RBM48. Core component of U2-type precatalytic, catalytic and postcatalytic spliceosomal complexes. Found in a mRNA splicing-dependent exon junction complex (EJC) with SRRM1. Interacts with U5 snRNP proteins SNRP116 and SNRNP40. Interacts with EFTUD2. Interacts (via the MPN (JAB/Mov34) domain) with PRPF3 ('Lys-63'-linked polyubiquitinated); may stabilize the U4/U6-U5 tri-snRNP complex. Interacts (via RNase H homology domain) with AAR2. Interacts with RPAP3 and URI1 in a ZNHIT2-dependent manner. Interacts with C9orf78. Interacts with SNRNP200; the interaction is direct. Interacts with TSSC4; the interaction is direct. In terms of tissue distribution, widely expressed.

It is found in the nucleus. It localises to the nucleus speckle. Its function is as follows. Plays a role in pre-mRNA splicing as core component of precatalytic, catalytic and postcatalytic spliceosomal complexes, both of the predominant U2-type spliceosome and the minor U12-type spliceosome. Functions as a scaffold that mediates the ordered assembly of spliceosomal proteins and snRNAs. Required for the assembly of the U4/U6-U5 tri-snRNP complex, a building block of the spliceosome. Functions as a scaffold that positions spliceosomal U2, U5 and U6 snRNAs at splice sites on pre-mRNA substrates, so that splicing can occur. Interacts with both the 5' and the 3' splice site. The chain is Pre-mRNA-processing-splicing factor 8 (PRPF8) from Homo sapiens (Human).